A 155-amino-acid polypeptide reads, in one-letter code: GALDGSWKEATLPQVKAMLQKDTGKASGDTVTYSGKTVHVVAAAVLPGFPFPSFEVHDKKNPTLDIPAGATVDVTFINTNKGFGHSFDITKKGPPFAVMPNIKPIVAGTGFSPVPKDGKFGYSEFTWHPTAGTYYYVCQIPGHAATGMFGKIIVK.

The Plastocyanin-like domain occupies 53 to 155 (SFEVHDKKNP…TGMFGKIIVK (103 aa)). Residues histidine 85, cysteine 138, histidine 143, and methionine 148 each contribute to the Cu cation site.

As to quaternary structure, monomer. It depends on Cu cation as a cofactor.

The protein localises to the periplasm. Electron carrier from cytochrome c552 to the A-type oxidase. This Acidithiobacillus ferrooxidans (Thiobacillus ferrooxidans) protein is Rusticyanin (rus).